A 96-amino-acid chain; its full sequence is uncharacterized protein (96 aa).

Over residues 1 to 18 the composition is skewed to basic and acidic residues; the sequence is MSNVDRYDVHRDGIEKDR. A disordered region spans residues 1 to 96; sequence MSNVDRYDVH…REQHHQPQKQ (96 aa). The segment covering 28 to 46 has biased composition (polar residues); the sequence is QNGQSQSTMDNRPPWNNDT. Positions 70-96 are enriched in basic and acidic residues; that stretch reads TIDRQQEELTKNWTESLREQHHQPQKQ.

This is an uncharacterized protein from Caenorhabditis elegans.